A 247-amino-acid chain; its full sequence is MSKLFWAMLSFITRLPVPRRWSQGLDFEHYSRGIITFPLIGLLLGAISGLVFMVLQAWCGVPLAALFSVLVLALMTGGFHLDGLADTCDGVFSARSRDRMLEIMRDSRLGTHGGLALIFVVLAKILVLSELALRGEPILASLAAACAVSRGTAALLMYRHRYAREEGLGNVFIGKIDGRQTCVTLGLAAIFAAVLLPGMHGVAAMVVTMVAIFILGQLLKRTLGGQTGDTLGAAIELGELVFLLALL.

The next 5 membrane-spanning stretches (helical) occupy residues Ile34–Val54, Cys59–Phe79, Gly113–Leu133, Ile138–Tyr158, and Val194–Ile214.

It belongs to the CobS family. Requires Mg(2+) as cofactor.

It is found in the cell inner membrane. The catalysed reaction is alpha-ribazole + adenosylcob(III)inamide-GDP = adenosylcob(III)alamin + GMP + H(+). The enzyme catalyses alpha-ribazole 5'-phosphate + adenosylcob(III)inamide-GDP = adenosylcob(III)alamin 5'-phosphate + GMP + H(+). Its pathway is cofactor biosynthesis; adenosylcobalamin biosynthesis; adenosylcobalamin from cob(II)yrinate a,c-diamide: step 7/7. Functionally, joins adenosylcobinamide-GDP and alpha-ribazole to generate adenosylcobalamin (Ado-cobalamin). Also synthesizes adenosylcobalamin 5'-phosphate from adenosylcobinamide-GDP and alpha-ribazole 5'-phosphate. The protein is Adenosylcobinamide-GDP ribazoletransferase of Escherichia coli (strain 55989 / EAEC).